The following is a 222-amino-acid chain: CEACAM1-like protein UL7 (222 aa).

Asparagine 50, asparagine 56, asparagine 60, asparagine 71, asparagine 105, asparagine 109, asparagine 125, asparagine 132, asparagine 147, asparagine 164, asparagine 168, and asparagine 189 each carry an N-linked (GlcNAc...) asparagine; by host glycan. A helical membrane pass occupies residues 193–213 (LALVGVIVFIALIVVCIMGWW).

The protein belongs to the RL11 family. In terms of assembly, interacts with host FLT3. Post-translationally, highly glycosylated.

The protein localises to the secreted. It localises to the host cell membrane. Plays a role in modulating the host immune response and affecting host cytokine production. Structurally and functionally homolog of host CEACAM1, induces endothelial cell angiogenesis. Ligands for host FLT3 receptor, activates the PI3K/AKT and MAPK/ERK pathways. In turn, triggers hematopoietic progenitor cell and monocyte differentiation leading to virus reactivation. The chain is CEACAM1-like protein UL7 (UL7) from Human cytomegalovirus (strain AD169) (HHV-5).